The chain runs to 242 residues: Glutamate transport ATP-binding protein GluA (242 aa).

Residues 2–236 form the ABC transporter domain; the sequence is IKMTGVQKFF…PQTDRAKDFL (235 aa). 34 to 41 is an ATP binding site; it reads GPSGSGKS.

Belongs to the ABC transporter superfamily. As to quaternary structure, the complex is composed of two ATP-binding proteins (GluA), two transmembrane proteins (GluC and GluD) and a solute-binding protein (GluB).

It is found in the cell membrane. It catalyses the reaction a polar amino acid(out) + ATP + H2O = a polar amino acid(in) + ADP + phosphate + H(+). It carries out the reaction L-glutamate(out) + ATP + H2O = L-glutamate(in) + ADP + phosphate + H(+). Part of the ABC transporter complex GluABCD involved in glutamate uptake. Probably responsible for energy coupling to the transport system. This chain is Glutamate transport ATP-binding protein GluA, found in Corynebacterium efficiens (strain DSM 44549 / YS-314 / AJ 12310 / JCM 11189 / NBRC 100395).